Consider the following 321-residue polypeptide: uncharacterized protein (321 aa).

This sequence belongs to the NAD(P)-dependent epimerase/dehydratase family.

This is an uncharacterized protein from Staphylococcus aureus (strain COL).